A 1165-amino-acid chain; its full sequence is Valine--tRNA ligase (1165 aa).

The 'HIGH' region signature appears at 43 to 53 (PNVTGSLHMGH). The 'KMSKS' region motif lies at 800 to 804 (KMSKT). Lys803 lines the ATP pocket. 2 coiled-coil regions span residues 1001–1032 (KNED…SDLQ) and 1097–1165 (HVDL…VLRS).

The protein belongs to the class-I aminoacyl-tRNA synthetase family. ValS type 1 subfamily. As to quaternary structure, monomer.

It is found in the cytoplasm. The catalysed reaction is tRNA(Val) + L-valine + ATP = L-valyl-tRNA(Val) + AMP + diphosphate. Functionally, catalyzes the attachment of valine to tRNA(Val). As ValRS can inadvertently accommodate and process structurally similar amino acids such as threonine, to avoid such errors, it has a 'posttransfer' editing activity that hydrolyzes mischarged Thr-tRNA(Val) in a tRNA-dependent manner. The chain is Valine--tRNA ligase from Aquifex aeolicus (strain VF5).